A 165-amino-acid chain; its full sequence is MTQTSENVTWLTQEAYNQLKAELEYLSGPARTEIAAKIAAAREEGDLRENGGYHAAKEEQGKQELRVRQLTQLLENAKVGEAPAADGAVAPGMVVTIAFDGDEDDTLDFLLASREYASADIETYSPQSPLGSGVNGKKVGEDAQYELPNGKLASVKILKAEPYQG.

The stretch at 55–78 (AAKEEQGKQELRVRQLTQLLENAK) forms a coiled coil.

The protein belongs to the GreA/GreB family.

Its function is as follows. Necessary for efficient RNA polymerase transcription elongation past template-encoded arresting sites. The arresting sites in DNA have the property of trapping a certain fraction of elongating RNA polymerases that pass through, resulting in locked ternary complexes. Cleavage of the nascent transcript by cleavage factors such as GreA or GreB allows the resumption of elongation from the new 3'terminus. GreA releases sequences of 2 to 3 nucleotides. This Streptomyces avermitilis (strain ATCC 31267 / DSM 46492 / JCM 5070 / NBRC 14893 / NCIMB 12804 / NRRL 8165 / MA-4680) protein is Transcription elongation factor GreA.